The chain runs to 116 residues: Propanediol dehydratase-reactivating factor small subunit (116 aa).

A Mg(2+)-binding site is contributed by glutamate 31.

It belongs to the DdrB/PduH family. In terms of assembly, forms a heterotetramer PduG(2)/PduH(2). It depends on Mg(2+) as a cofactor.

It localises to the bacterial microcompartment. The enzyme catalyses ATP + H2O = ADP + phosphate + H(+). It functions in the pathway polyol metabolism; 1,2-propanediol degradation. Its function is as follows. Small subunit of the propanediol dehydratase-reactivating factor (DDR), which reactivates suicidally inhibited adenosylcobalamin-dependent propanediol dehydratase (diol dehydratase, DDH) found in the bacterial microcompartment (BMC) dedicated to 1,2-propanediol (1,2-PD) degradation. Reactivates inactivated DDH in the presence of ATP, Mg(2+) and free adenosylcobalamin (AdoCbl), by mediating the exchange of the tightly bound damaged cofactor AdoCbl for a free intact one. In terms of biological role, expression of a cosmid containing the full 21-gene pdu operon in E.coli allows E.coli to grow on 1,2-propanediol (1,2-PD) with the appearance of bacterial microcompartments (BMC) in its cytoplasm. Functionally, the 1,2-PD-specific bacterial microcompartment (BMC) concentrates low levels of 1,2-PD catabolic enzymes, concentrates volatile reaction intermediates thus enhancing pathway flux and keeps the level of toxic, mutagenic propionaldehyde low. This is Propanediol dehydratase-reactivating factor small subunit from Citrobacter freundii.